A 319-amino-acid chain; its full sequence is Cell division protein FtsQ (319 aa).

The disordered stretch occupies residues Met1–Asn53. Residues Met1–Arg70 are Cytoplasmic-facing. The segment covering Ser27–Gly52 has biased composition (basic and acidic residues). The helical transmembrane segment at Trp71–Ala87 threads the bilayer. Residues Tyr88–Pro319 are Periplasmic-facing. Positions Arg97 to Gln166 constitute a POTRA domain.

The protein belongs to the FtsQ/DivIB family. FtsQ subfamily. In terms of assembly, part of a complex composed of FtsB, FtsL and FtsQ.

Its subcellular location is the cell inner membrane. In terms of biological role, essential cell division protein. May link together the upstream cell division proteins, which are predominantly cytoplasmic, with the downstream cell division proteins, which are predominantly periplasmic. May control correct divisome assembly. This is Cell division protein FtsQ from Cellvibrio japonicus (strain Ueda107) (Pseudomonas fluorescens subsp. cellulosa).